Here is a 205-residue protein sequence, read N- to C-terminus: MKMIIGRKLGMTRVFVGDKVVPVTVIKAGPCFVVQKKTIETDGYNAVQLGFEEAKKVNKPMEGVFKKAGVNPLKVLKEFRVEDPDKFEVGQEIKVDIFSEGDKIDITGWSKGRGFAGAMKRWGFRGGPKSHGAKFHRELGSVGQHSEPARIFKGKKMPGQYGNERVTILNSEIVKIDVENNLIAVKGGVPGARGGLVLIKSAKRG.

This sequence belongs to the universal ribosomal protein uL3 family. Part of the 50S ribosomal subunit. Forms a cluster with proteins L14 and L19.

Functionally, one of the primary rRNA binding proteins, it binds directly near the 3'-end of the 23S rRNA, where it nucleates assembly of the 50S subunit. The polypeptide is Large ribosomal subunit protein uL3 (Thermosipho melanesiensis (strain DSM 12029 / CIP 104789 / BI429)).